Here is a 59-residue protein sequence, read N- to C-terminus: Large ribosomal subunit protein bL32 (59 aa).

Positions 1–59 are disordered; it reads MAVQQNRKTPSKRGMRRSHDALSGPALSVEPQTGETHRRHHVSPDGYYRGRKVMQGRED. Over residues 49 to 59 the composition is skewed to basic residues; that stretch reads RGRKVMQGRED.

Belongs to the bacterial ribosomal protein bL32 family.

This chain is Large ribosomal subunit protein bL32, found in Alkalilimnicola ehrlichii (strain ATCC BAA-1101 / DSM 17681 / MLHE-1).